Reading from the N-terminus, the 432-residue chain is Muscle cell intermediate filament protein OV71 (432 aa).

The segment at 1–111 is coil 1B; the sequence is KLIDELEEYK…RVHDQEISEL (111 aa). Residues 1–277 enclose the IF rod domain; it reads KLIDELEEYK…KMLEGEENRA (277 aa). The segment at 112 to 128 is linker 12; sequence QAMAARDTTSENREYFK. The coil 2 stretch occupies residues 129–277; sequence NELSSAIRDI…KMLEGEENRA (149 aa). Positions 278-432 are tail; it reads GLRQLVEQVV…HIQRSSHTIS (155 aa). The LTD domain occupies 310 to 427; it reads SRTSFQRSAK…EERASHIQRS (118 aa).

It belongs to the intermediate filament family.

The polypeptide is Muscle cell intermediate filament protein OV71 (OV71) (Onchocerca volvulus).